The chain runs to 517 residues: Methylmalonyl-CoA decarboxylase subunit alpha (517 aa).

The region spanning 4 to 260 is the CoA carboxyltransferase N-terminal domain; sequence AAKKIQDLQK…NNMEKAPEFG (257 aa). In terms of domain architecture, CoA carboxyltransferase C-terminal spans 271–513; it reads ELDALMPDNP…REKLPAKKHG (243 aa).

This sequence belongs to the AccD/PCCB family. The methylmalonyl-CoA decarboxylase is composed of four subunits: the carboxyltransferase alpha subunit (MmdA), the tunnel beta subunit (MmdB), the biotin-containing gamma subunit (MmdC) and the delta subunit (MmdD).

The protein localises to the cell membrane. It catalyses the reaction (S)-methylmalonyl-CoA + Na(+)(in) + H(+)(out) = propanoyl-CoA + Na(+)(out) + CO2. Functionally, carboxyltransferase subunit of the sodium ion pump methylmalonyl-CoA decarboxylase, which converts the chemical energy of a decarboxylation reaction into an electrochemical gradient of Na(+) ions across the cytoplasmic membrane, thereby creating a sodium ion motive force that is used for ATP synthesis. The alpha subunit catalyzes the Na(+)-independent carboxyltransfer from methylmalonyl-CoA to the prosthetic biotin group located on the gamma subunit. In Propionigenium modestum, this protein is Methylmalonyl-CoA decarboxylase subunit alpha.